The sequence spans 136 residues: NLP effector protein 13 (136 aa).

The Conserved undecapeptide motif I motif lies at 1 to 9 (MYSWYFPKD). The Hepta-peptide GHRHDWE motif II signature appears at 16–22 (GHRHDWE).

Belongs to the Necrosis inducing protein (NPP1) family.

It is found in the secreted. In terms of biological role, secreted effector that contributes moderately to virulence during infection by P.capsici. Causes only small yellow areas at 3 days after inoculation of host C.annuum leaves; these areas expand somewhat and became necrotic at 7 days after inoculation. Leads only to chlorotic areas, without necrosis at 7 days after non-host N.benthamiana leaves infection. The protein is NLP effector protein 13 of Phytophthora capsici.